The primary structure comprises 663 residues: Transketolase 1 (663 aa).

His26 contributes to the substrate binding site. Lys46 bears the N6-acetyllysine mark. Thiamine diphosphate is bound by residues His66 and 114-116 (GPL). Mg(2+) is bound at residue Asp155. Residues Gly156 and Asn185 each contribute to the thiamine diphosphate site. Asn185 and Ile187 together coordinate Mg(2+). Positions 261, 358, and 385 each coordinate substrate. His261 provides a ligand contact to thiamine diphosphate. Glu411 functions as the Proton donor in the catalytic mechanism. Residue Phe437 coordinates thiamine diphosphate. 4 residues coordinate substrate: His461, Asp469, His473, and Arg520.

This sequence belongs to the transketolase family. Homodimer. Requires Mg(2+) as cofactor. Ca(2+) is required as a cofactor. It depends on Mn(2+) as a cofactor. The cofactor is Co(2+). Thiamine diphosphate serves as cofactor.

The enzyme catalyses D-sedoheptulose 7-phosphate + D-glyceraldehyde 3-phosphate = aldehydo-D-ribose 5-phosphate + D-xylulose 5-phosphate. Its function is as follows. Catalyzes the transfer of a two-carbon ketol group from a ketose donor to an aldose acceptor, via a covalent intermediate with the cofactor thiamine pyrophosphate. Thus, catalyzes the reversible transfer of a two-carbon ketol group from sedoheptulose-7-phosphate to glyceraldehyde-3-phosphate, producing xylulose-5-phosphate and ribose-5-phosphate. This Escherichia coli (strain K12) protein is Transketolase 1 (tktA).